We begin with the raw amino-acid sequence, 631 residues long: Arginine--tRNA ligase (631 aa).

The short motif at 132 to 142 is the 'HIGH' region element; sequence PNIAKPLHVGH.

The protein belongs to the class-I aminoacyl-tRNA synthetase family.

The protein localises to the cytoplasm. The enzyme catalyses tRNA(Arg) + L-arginine + ATP = L-arginyl-tRNA(Arg) + AMP + diphosphate. This chain is Arginine--tRNA ligase, found in Halobacterium salinarum (strain ATCC 700922 / JCM 11081 / NRC-1) (Halobacterium halobium).